Here is a 116-residue protein sequence, read N- to C-terminus: NAD(P)H-quinone oxidoreductase subunit M (116 aa).

Belongs to the complex I NdhM subunit family. In terms of assembly, NDH-1 can be composed of about 15 different subunits; different subcomplexes with different compositions have been identified which probably have different functions.

The protein resides in the cellular thylakoid membrane. The enzyme catalyses a plastoquinone + NADH + (n+1) H(+)(in) = a plastoquinol + NAD(+) + n H(+)(out). It catalyses the reaction a plastoquinone + NADPH + (n+1) H(+)(in) = a plastoquinol + NADP(+) + n H(+)(out). NDH-1 shuttles electrons from an unknown electron donor, via FMN and iron-sulfur (Fe-S) centers, to quinones in the respiratory and/or the photosynthetic chain. The immediate electron acceptor for the enzyme in this species is believed to be plastoquinone. Couples the redox reaction to proton translocation, and thus conserves the redox energy in a proton gradient. Cyanobacterial NDH-1 also plays a role in inorganic carbon-concentration. This is NAD(P)H-quinone oxidoreductase subunit M from Synechococcus sp. (strain RCC307).